The chain runs to 152 residues: UPF0179 protein Mlab_1307 (152 aa).

This sequence belongs to the UPF0179 family.

The chain is UPF0179 protein Mlab_1307 from Methanocorpusculum labreanum (strain ATCC 43576 / DSM 4855 / Z).